A 102-amino-acid polypeptide reads, in one-letter code: Small ribosomal subunit protein uS10 (102 aa).

Belongs to the universal ribosomal protein uS10 family. As to quaternary structure, part of the 30S ribosomal subunit.

In terms of biological role, involved in the binding of tRNA to the ribosomes. This is Small ribosomal subunit protein uS10 from Methanoregula boonei (strain DSM 21154 / JCM 14090 / 6A8).